Consider the following 391-residue polypeptide: Zinc finger protein ubi-d4 (391 aa).

Ala2 bears the N-acetylalanine mark. Glycyl lysine isopeptide (Lys-Gly) (interchain with G-Cter in SUMO2) cross-links involve residues Lys10, Lys99, Lys107, and Lys108. 2 disordered regions span residues Trp79–Pro147 and Asp165–Ala199. Composition is skewed to basic and acidic residues over residues Pro100 to Gly110 and Asp126 to Asp140. Ser142 carries the post-translational modification Phosphoserine. The span at Asp165–Glu174 shows a compositional bias: acidic residues. Tyr172 is subject to Phosphotyrosine. At Thr176 the chain carries Phosphothreonine. Glycyl lysine isopeptide (Lys-Gly) (interchain with G-Cter in SUMO2) cross-links involve residues Lys178 and Lys196. Ser200 carries the phosphoserine modification. Residues Tyr209–His232 form a C2H2-type zinc finger. Residues Leu233–Leu266 are disordered. The residue at position 244 (Ser244) is a Phosphoserine. A compositionally biased stretch (basic and acidic residues) spans Arg253–Pro263. 2 consecutive PHD-type zinc fingers follow at residues Asn270 to Cys330 and Cys327 to Leu377. Ser280 is subject to Phosphoserine. Lys281 is covalently cross-linked (Glycyl lysine isopeptide (Lys-Gly) (interchain with G-Cter in SUMO2)).

The protein belongs to the requiem/DPF family. Interacts with the nucleosomes, in particular nucleosomes bearing histone H3 crotonylated at 'Lys-14' (H3K14cr) for which DPF2 has high affinity. Also interacts (via PHD-type zinc finger domains) with histone H3 butyrylated at 'Lys-14' (H3K14bu), histone H3 propionylated at 'Lys-14' (H3K14pr), and histone H3 acetylated at 'Lys-14' (H3K14ac). Interacts with histone H3 acetylated at 'Lys-9' (H3K9ac), histone H3 di-methylated at 'Lys-9' (H3K9me2), and histone H3 tri-methylated at 'Lys-9' (H3K9me3). Interacts with histone H4 acetylated at 'Lys-12' (H4K12ac). Interacts with histone H4 acetylated at 'Lys-16' (H4K16ac). Interacts with SWI/SNF complex components. Interacts with SMARCA2, SMARCA4, SMARCB1 and SMARCD1. Interacts with SMARCC1, SMARCC2 and ACTL6A. Interacts with RUNX1. In embryo, highest levels are seen in brain, eyes, thymus and olfactory epithelium in nose, whereas several other tissues, including the musculoskeletal system, show moderate expression. In adult, higher expression in testis, medium in thymus and spleen, lower in certain parts of the brain as the hippocampus. No expression in adult heart, lung, liver, duodenum and kidney.

It localises to the nucleus. The protein localises to the cytoplasm. Functionally, plays an active role in transcriptional regulation by binding modified histones H3 and H4. Is a negative regulator of myeloid differentiation of hematopoietic progenitor cells. Might also have a role in the development and maturation of lymphoid cells. Involved in the regulation of non-canonical NF-kappa-B pathway. The sequence is that of Zinc finger protein ubi-d4 (Dpf2) from Mus musculus (Mouse).